A 318-amino-acid chain; its full sequence is Large ribosomal subunit protein uL10 (318 aa).

Tyr24 is subject to Phosphotyrosine. Thr59 is modified (phosphothreonine). Residue Lys264 forms a Glycyl lysine isopeptide (Lys-Gly) (interchain with G-Cter in ubiquitin) linkage. A Glycyl lysine isopeptide (Lys-Gly) (interchain with G-Cter in SUMO1); alternate cross-link involves residue Lys298. Lys298 participates in a covalent cross-link: Glycyl lysine isopeptide (Lys-Gly) (interchain with G-Cter in SUMO2); alternate. Positions 298 to 318 (KVEAKEESEESDEDMGFGLFD) are disordered. Residues 303–312 (EESEESDEDM) are compositionally biased toward acidic residues. 2 positions are modified to phosphoserine: Ser305 and Ser308.

This sequence belongs to the universal ribosomal protein uL10 family. In terms of assembly, P0 forms a pentameric complex by interaction with dimers of P1 and P2. Identified in a IGF2BP1-dependent mRNP granule complex containing untranslated mRNAs. Interacts with APEX1. Interacts with FMR1. In terms of processing, ubiquitinated at Lys-264 by RNF14 and RNF25 in response to ribosome collisions (ribosome stalling).

The protein localises to the nucleus. It localises to the cytoplasm. Its function is as follows. Ribosomal protein P0 is the functional equivalent of E.coli protein L10. This chain is Large ribosomal subunit protein uL10 (RPLP0), found in Sus scrofa (Pig).